The primary structure comprises 397 residues: Ribosomal RNA large subunit methyltransferase I (397 aa).

The PUA domain occupies 2–81 (SAQVILQPSR…ESIDNGFFLR (80 aa)).

This sequence belongs to the methyltransferase superfamily. RlmI family.

The protein resides in the cytoplasm. It catalyses the reaction cytidine(1962) in 23S rRNA + S-adenosyl-L-methionine = 5-methylcytidine(1962) in 23S rRNA + S-adenosyl-L-homocysteine + H(+). In terms of biological role, specifically methylates the cytosine at position 1962 (m5C1962) of 23S rRNA. The protein is Ribosomal RNA large subunit methyltransferase I of Alteromonas mediterranea (strain DSM 17117 / CIP 110805 / LMG 28347 / Deep ecotype).